Consider the following 436-residue polypeptide: Trigger factor (436 aa).

One can recognise a PPIase FKBP-type domain in the interval 161 to 246 (GDQLNIDFVG…VNSVSAPQLP (86 aa)).

Belongs to the FKBP-type PPIase family. Tig subfamily.

The protein resides in the cytoplasm. The catalysed reaction is [protein]-peptidylproline (omega=180) = [protein]-peptidylproline (omega=0). In terms of biological role, involved in protein export. Acts as a chaperone by maintaining the newly synthesized protein in an open conformation. Functions as a peptidyl-prolyl cis-trans isomerase. This chain is Trigger factor, found in Ectopseudomonas mendocina (strain ymp) (Pseudomonas mendocina).